A 249-amino-acid polypeptide reads, in one-letter code: Photosystem I-associated linker protein CpcL (249 aa).

The region spanning V11–K189 is the PBS-linker domain. A helical membrane pass occupies residues V223–I247.

The protein belongs to the phycobilisome linker protein family. Part of a specialized phycobilisome (PBS), a structure that is usually composed of two distinct substructures: a core complex and a number of rods radiating from the core. This protein is part of a core-less PBS rod (called CpcL-PBS) with on average 5 stacked phycocyanin hexamers (PC, CpcA and CpcB). Linker CpcL connects the PC stack to the thylakoid, the hexamers are linked by 1 copy of CpcC1, 3 copies of CpcC2 and the stack is terminated by a single copy of CpcD. Ferredoxin--NADP reductase (petH) is also part of the complex. CpcL-PBS has no central core proteins (allophycocyanin ApcA, ApcB) nor phycobiliprotein ApcE.

Its subcellular location is the cellular thylakoid membrane. Functionally, rod linker protein, associated with phycocyanin. Linker polypeptides determine the state of aggregation and the location of the disk-shaped phycobiliprotein units within the phycobilisome and modulate their spectroscopic properties in order to mediate a directed and optimal energy transfer. Plays a role in energy transfer from the phycobilisome to photosystem I (PSI). Although able to transfer energy to both photosystems, this is predominantly a PSI antenna. This chain is Photosystem I-associated linker protein CpcL, found in Synechocystis sp. (strain ATCC 27184 / PCC 6803 / Kazusa).